We begin with the raw amino-acid sequence, 186 residues long: Phosphopantetheine adenylyltransferase (186 aa).

Thr14 contacts substrate. ATP-binding positions include 14 to 15 (TF) and His22. Substrate contacts are provided by Lys46, Leu78, and Arg92. Residues 93–95 (GLR), Glu103, and 128–134 (WLYISST) contribute to the ATP site.

This sequence belongs to the bacterial CoaD family. As to quaternary structure, homohexamer. It depends on Mg(2+) as a cofactor.

The protein resides in the cytoplasm. The enzyme catalyses (R)-4'-phosphopantetheine + ATP + H(+) = 3'-dephospho-CoA + diphosphate. It participates in cofactor biosynthesis; coenzyme A biosynthesis; CoA from (R)-pantothenate: step 4/5. Reversibly transfers an adenylyl group from ATP to 4'-phosphopantetheine, yielding dephospho-CoA (dPCoA) and pyrophosphate. The protein is Phosphopantetheine adenylyltransferase of Nitratidesulfovibrio vulgaris (strain ATCC 29579 / DSM 644 / CCUG 34227 / NCIMB 8303 / VKM B-1760 / Hildenborough) (Desulfovibrio vulgaris).